The primary structure comprises 319 residues: 33 kDa chaperonin (319 aa).

Disulfide bonds link C239–C241 and C272–C275. The interval 300-319 is disordered; it reads EVSEEMKKAEEKEKEEKNKK.

The protein belongs to the HSP33 family. Post-translationally, under oxidizing conditions two disulfide bonds are formed involving the reactive cysteines. Under reducing conditions zinc is bound to the reactive cysteines and the protein is inactive.

It is found in the cytoplasm. Functionally, redox regulated molecular chaperone. Protects both thermally unfolding and oxidatively damaged proteins from irreversible aggregation. Plays an important role in the bacterial defense system toward oxidative stress. In Clostridium perfringens (strain ATCC 13124 / DSM 756 / JCM 1290 / NCIMB 6125 / NCTC 8237 / Type A), this protein is 33 kDa chaperonin.